The following is a 196-amino-acid chain: Holliday junction branch migration complex subunit RuvA (196 aa).

The domain I stretch occupies residues M1–A63. Positions D64–A142 are domain II. The tract at residues V143–P151 is flexible linker. The domain III stretch occupies residues P151–K196.

Belongs to the RuvA family. In terms of assembly, homotetramer. Forms an RuvA(8)-RuvB(12)-Holliday junction (HJ) complex. HJ DNA is sandwiched between 2 RuvA tetramers; dsDNA enters through RuvA and exits via RuvB. An RuvB hexamer assembles on each DNA strand where it exits the tetramer. Each RuvB hexamer is contacted by two RuvA subunits (via domain III) on 2 adjacent RuvB subunits; this complex drives branch migration. In the full resolvosome a probable DNA-RuvA(4)-RuvB(12)-RuvC(2) complex forms which resolves the HJ.

Its subcellular location is the cytoplasm. The RuvA-RuvB-RuvC complex processes Holliday junction (HJ) DNA during genetic recombination and DNA repair, while the RuvA-RuvB complex plays an important role in the rescue of blocked DNA replication forks via replication fork reversal (RFR). RuvA specifically binds to HJ cruciform DNA, conferring on it an open structure. The RuvB hexamer acts as an ATP-dependent pump, pulling dsDNA into and through the RuvAB complex. HJ branch migration allows RuvC to scan DNA until it finds its consensus sequence, where it cleaves and resolves the cruciform DNA. The protein is Holliday junction branch migration complex subunit RuvA of Mycobacterium sp. (strain JLS).